Reading from the N-terminus, the 498-residue chain is Pentatricopeptide repeat-containing protein At3g61360 (498 aa).

9 PPR repeats span residues 102–132 (TSDS…VRKD), 138–172 (SFKS…IFRK), 175–205 (GVDE…LHSR), 209–243 (DVKT…GFKP), 244–278 (NSVT…DFDI), 279–313 (TVQI…GLTP), 314–348 (DCGA…GIEP), 349–385 (DSVT…SLVP), and 386–420 (KTPT…GYCP).

Belongs to the PPR family. P subfamily.

The sequence is that of Pentatricopeptide repeat-containing protein At3g61360 from Arabidopsis thaliana (Mouse-ear cress).